A 143-amino-acid polypeptide reads, in one-letter code: Transcriptional regulator SlyA (143 aa).

The region spanning Glu2–Lys135 is the HTH marR-type domain. The segment at residues Gln49–Glu72 is a DNA-binding region (H-T-H motif).

This sequence belongs to the SlyA family. Homodimer.

In terms of biological role, transcription regulator that can specifically activate or repress expression of target genes. The polypeptide is Transcriptional regulator SlyA (Yersinia pestis bv. Antiqua (strain Antiqua)).